Reading from the N-terminus, the 186-residue chain is Threonylcarbamoyl-AMP synthase (186 aa).

A YrdC-like domain is found at 1–186 (MADTWEAAHS…LNNQVFRDDA (186 aa)).

This sequence belongs to the SUA5 family. TsaC subfamily.

The protein resides in the cytoplasm. The catalysed reaction is L-threonine + hydrogencarbonate + ATP = L-threonylcarbamoyladenylate + diphosphate + H2O. Its function is as follows. Required for the formation of a threonylcarbamoyl group on adenosine at position 37 (t(6)A37) in tRNAs that read codons beginning with adenine. Catalyzes the conversion of L-threonine, HCO(3)(-)/CO(2) and ATP to give threonylcarbamoyl-AMP (TC-AMP) as the acyladenylate intermediate, with the release of diphosphate. In Idiomarina loihiensis (strain ATCC BAA-735 / DSM 15497 / L2-TR), this protein is Threonylcarbamoyl-AMP synthase.